A 377-amino-acid chain; its full sequence is Cytochrome b (377 aa).

The next 4 helical transmembrane spans lie at 33–53, 77–98, 113–133, and 178–198; these read FGSL…FLAM, WLIR…YLHT, WTMG…GYVL, and FFMI…VHLL. 2 residues coordinate heme b: His83 and His97. The heme b site is built by His182 and His196. His201 lines the a ubiquinone pocket. A run of 4 helical transmembrane segments spans residues 226–246, 288–308, 320–340, and 347–367; these read YKDL…SLLS, LGGV…PLSS, FNQI…WIGA, and FIIM…LNPM.

The protein belongs to the cytochrome b family. The main subunits of complex b-c1 are: cytochrome b, cytochrome c1 and the Rieske protein. It depends on heme b as a cofactor.

The protein resides in the mitochondrion inner membrane. Its function is as follows. Component of the ubiquinol-cytochrome c reductase complex (complex III or cytochrome b-c1 complex) that is part of the mitochondrial respiratory chain. The b-c1 complex mediates electron transfer from ubiquinol to cytochrome c. Contributes to the generation of a proton gradient across the mitochondrial membrane that is then used for ATP synthesis. This is Cytochrome b (MT-CYB) from Tetrodontophora bielanensis (Giant springtail).